We begin with the raw amino-acid sequence, 119 residues long: Beta-2-microglobulin (119 aa).

The N-terminal stretch at 1-20 (MARFVVAALLVLLCLSGLEA) is a signal peptide. The 90-residue stretch at 25-114 (PKIQVYSRHP…VTFPTPKTVK (90 aa)) folds into the Ig-like C1-type domain. Cysteine 45 and cysteine 100 are joined by a disulfide.

It belongs to the beta-2-microglobulin family. Heterodimer of an alpha chain and a beta chain. Beta-2-microglobulin is the beta-chain of major histocompatibility complex class I molecules.

The protein resides in the secreted. In terms of biological role, component of the class I major histocompatibility complex (MHC). Involved in the presentation of peptide antigens to the immune system. This is Beta-2-microglobulin (B2M) from Cebus albifrons (White-fronted capuchin).